We begin with the raw amino-acid sequence, 353 residues long: Protein Wnt-11b-1 (353 aa).

A signal peptide spans 1–22 (MAQIHHCVTLLLILCCSGLCGA). 3 N-linked (GlcNAc...) asparagine glycosylation sites follow: Asn-31, Asn-38, and Asn-88. 5 disulfides stabilise this stretch: Cys-78/Cys-89, Cys-128/Cys-136, Cys-138/Cys-155, Cys-208/Cys-222, and Cys-210/Cys-217. Ser-214 carries the O-palmitoleoyl serine; by PORCN lipid modification. Sulfotyrosine occurs at positions 274 and 281. Intrachain disulfides connect Cys-282/Cys-313, Cys-298/Cys-308, Cys-312/Cys-352, Cys-328/Cys-343, Cys-330/Cys-340, and Cys-335/Cys-336. N-linked (GlcNAc...) asparagine glycosylation occurs at Asn-299.

The protein belongs to the Wnt family. As to quaternary structure, homodimer. Secreted homodimers form a complex with wnt5a homodimers; tyrosine sulfation of both wnt11 and wnt5a by tpst1 is required for this interaction. Interacts with the transmembrane receptor fzd7/fz7. Interacts with lrp6 and ryk. Interacts with tdgf1/frl1. Interacts weakly with frzb1 and strongly with frzb2/crescent. Interaction with frzb2/crescent antagonizes wnt11 function in the neuroectoderm, but enhances it in mesodermal tissue. Glycosylation is required for protein secretion. Post-translationally, palmitoleoylation is required for efficient binding to frizzled receptors. Depalmitoleoylation leads to Wnt signaling pathway inhibition.

It is found in the secreted. The protein localises to the extracellular space. It localises to the extracellular matrix. Its function is as follows. Ligand for the frizzled7 transmembrane receptor. Primarily acts via non-canonical Wnt pathways mediated by either Ca(2+) and PKC, or by JNK and dvl2/dsh. Depending on the cellular context, can also signal via the canonical Wnt pathway mediated by beta-catenin and dvl2/dsh. May also inhibit canonical Wnt signaling. Maternally initiates dorsal/ventral axis formation by a canonical route, which signals via lrp6. In a complex with wnt5a, activates the canonical and non-canonical processes involved in axis formation. In the non-canonical pathway, acts through fzd7/fz7 to induce phosphorylation of dvl2/dsh. Signals through a non-canonical Wnt pathway to regulate convergent extension movements during gastrulation. Interactions with the secreted Wnt antagonist sfrp5 to coordinate foregut development, acting via a non-canonical wnt pathway whereby sfrp5 restricts wnt11b activity to prevent inappropriate foregut formation. Mediates cardiogenesis via non-canonical Wnt signaling involving JNK-activation and PKC. Acts redundantly with wnt11/wnt11r during pronephros induction. This Xenopus tropicalis (Western clawed frog) protein is Protein Wnt-11b-1.